We begin with the raw amino-acid sequence, 127 residues long: Small ribosomal subunit protein uS11 (127 aa).

Belongs to the universal ribosomal protein uS11 family. In terms of assembly, part of the 30S ribosomal subunit. Interacts with proteins S7 and S18. Binds to IF-3.

Its function is as follows. Located on the platform of the 30S subunit, it bridges several disparate RNA helices of the 16S rRNA. Forms part of the Shine-Dalgarno cleft in the 70S ribosome. The protein is Small ribosomal subunit protein uS11 of Chlorobium limicola (strain DSM 245 / NBRC 103803 / 6330).